The sequence spans 108 residues: Urease subunit beta (108 aa).

Belongs to the urease beta subunit family. As to quaternary structure, heterotrimer of UreA (gamma), UreB (beta) and UreC (alpha) subunits. Three heterotrimers associate to form the active enzyme.

The protein localises to the cytoplasm. It carries out the reaction urea + 2 H2O + H(+) = hydrogencarbonate + 2 NH4(+). It participates in nitrogen metabolism; urea degradation; CO(2) and NH(3) from urea (urease route): step 1/1. This is Urease subunit beta from Chromohalobacter salexigens (strain ATCC BAA-138 / DSM 3043 / CIP 106854 / NCIMB 13768 / 1H11).